A 128-amino-acid chain; its full sequence is Aspartate 1-decarboxylase (128 aa).

Residue Ser-25 is the Schiff-base intermediate with substrate; via pyruvic acid of the active site. Ser-25 is subject to Pyruvic acid (Ser). Thr-57 lines the substrate pocket. Tyr-58 (proton donor) is an active-site residue. 73 to 75 lines the substrate pocket; the sequence is GSA.

It belongs to the PanD family. Heterooctamer of four alpha and four beta subunits. It depends on pyruvate as a cofactor. Is synthesized initially as an inactive proenzyme, which is activated by self-cleavage at a specific serine bond to produce a beta-subunit with a hydroxyl group at its C-terminus and an alpha-subunit with a pyruvoyl group at its N-terminus.

Its subcellular location is the cytoplasm. The enzyme catalyses L-aspartate + H(+) = beta-alanine + CO2. It participates in cofactor biosynthesis; (R)-pantothenate biosynthesis; beta-alanine from L-aspartate: step 1/1. Catalyzes the pyruvoyl-dependent decarboxylation of aspartate to produce beta-alanine. The chain is Aspartate 1-decarboxylase from Burkholderia cenocepacia (strain ATCC BAA-245 / DSM 16553 / LMG 16656 / NCTC 13227 / J2315 / CF5610) (Burkholderia cepacia (strain J2315)).